The chain runs to 445 residues: Rab GDP dissociation inhibitor beta (445 aa).

Methionine 1 carries the post-translational modification N-acetylmethionine. Lysine 57 is subject to N6-succinyllysine. Lysine 112 is subject to N6-acetyllysine. Serine 130 carries the post-translational modification Phosphoserine. Lysine 269 is subject to N6-acetyllysine. Serine 382 is modified (phosphoserine).

Belongs to the Rab GDI family. In terms of assembly, interacts with RHOH. Interacts with the GDP-bound inactive forms of RAB3A, RAB3B, RAB3C, RAB5A, RAB5B, RAB5C, RAB8A, RAB8B, RAB10, RAB12, RAB35, and RAB43; binds RAB3D to a lesser extent. Interacts with DZIP1; this interaction negatively regulates the interaction of GDI2 with GDP-bound RAB8A.

It localises to the cytoplasm. The protein localises to the membrane. It is found in the golgi apparatus. Its subcellular location is the trans-Golgi network. Functionally, GDP-dissociation inhibitor preventing the GDP to GTP exchange of most Rab proteins. By keeping these small GTPases in their inactive GDP-bound form regulates intracellular membrane trafficking. Negatively regulates protein transport to the cilium and ciliogenesis through the inhibition of RAB8A. This Pongo abelii (Sumatran orangutan) protein is Rab GDP dissociation inhibitor beta (GDI2).